A 286-amino-acid chain; its full sequence is MILLDGKATAAAVREELKKDVDALKDRAGRAPGLAVILVGDDPASQVYVRNKERACADAGIRSEAFRISAQTTQQELEERIAALNAREDIDGILLQLPLPAGLDSQRCLELIDPAKDVDGFHPVNMGKLTLGLPGFRPCTPAGVMTLLERYNLSPAGKKAVVLGRSNIVGKPLALMLGASGPFANATVTVCHSRTPDLAQQCREADFLFVAIGRANFVTADMVKPGAVVVDVGINRTENGLAGDVDFGPVSKVASAITPVPGGIGPMTIAQLLVNTVASWKKRCGV.

NADP(+)-binding positions include 164 to 166 (GRS), S193, and I234.

The protein belongs to the tetrahydrofolate dehydrogenase/cyclohydrolase family. Homodimer.

It carries out the reaction (6R)-5,10-methylene-5,6,7,8-tetrahydrofolate + NADP(+) = (6R)-5,10-methenyltetrahydrofolate + NADPH. It catalyses the reaction (6R)-5,10-methenyltetrahydrofolate + H2O = (6R)-10-formyltetrahydrofolate + H(+). Its pathway is one-carbon metabolism; tetrahydrofolate interconversion. Functionally, catalyzes the oxidation of 5,10-methylenetetrahydrofolate to 5,10-methenyltetrahydrofolate and then the hydrolysis of 5,10-methenyltetrahydrofolate to 10-formyltetrahydrofolate. The protein is Bifunctional protein FolD of Oleidesulfovibrio alaskensis (strain ATCC BAA-1058 / DSM 17464 / G20) (Desulfovibrio alaskensis).